Here is a 492-residue protein sequence, read N- to C-terminus: Glutamyl-tRNA(Gln) amidotransferase subunit A (492 aa).

Catalysis depends on charge relay system residues K78 and S158. The active-site Acyl-ester intermediate is S182.

This sequence belongs to the amidase family. GatA subfamily. Heterotrimer of A, B and C subunits.

It catalyses the reaction L-glutamyl-tRNA(Gln) + L-glutamine + ATP + H2O = L-glutaminyl-tRNA(Gln) + L-glutamate + ADP + phosphate + H(+). Functionally, allows the formation of correctly charged Gln-tRNA(Gln) through the transamidation of misacylated Glu-tRNA(Gln) in organisms which lack glutaminyl-tRNA synthetase. The reaction takes place in the presence of glutamine and ATP through an activated gamma-phospho-Glu-tRNA(Gln). The protein is Glutamyl-tRNA(Gln) amidotransferase subunit A of Orientia tsutsugamushi (strain Boryong) (Rickettsia tsutsugamushi).